The primary structure comprises 2098 residues: Unconventional myosin heavy chain 6 (2098 aa).

The region spanning 62 to 732 is the Myosin motor domain; the sequence is QGVEDMCQLG…HDLVLEQEYY (671 aa). Residue 155–162 participates in ATP binding; the sequence is GESGAGKT. 2 actin-binding regions span residues 609-631 and 711-725; these read LEQL…KPNE and QLGK…KHDL. IQ domains follow at residues 735-757, 758-787, and 804-833; these read LKDK…DFEK, QRQA…GFSR, and LRKT…RGEK. Residues 860–898 form a disordered region; it reads FLPSDGKDSGNENDSADSSRRGSYSRLHTSPVMPPANIP. Residues 929-1168 form the MyTH4 1 domain; it reads HVKKPLKTAL…PSYVELQANK (240 aa). A Ras-associating domain is found at 1171–1211; that stretch reads KPVVLAVTFMDGSVKTLCADSATTAAELCKQLAEKVGLTNS. One can recognise an FERM 1 domain in the interval 1173-1481; that stretch reads VVLAVTFMDG…MFLEGLKKRS (309 aa). The 69-residue stretch at 1479–1547 folds into the SH3 domain; the sequence is KRSRYLVAIK…RAENVYVLPT (69 aa). One can recognise a MyTH4 2 domain in the interval 1624–1772; that stretch reads FSREHIDQPL…PHLVEVEAIQ (149 aa). An FERM 2 domain is found at 1778–2086; that stretch reads IFHKVFFPDN…SYISLLISNQ (309 aa).

The protein belongs to the TRAFAC class myosin-kinesin ATPase superfamily. Myosin family. Interacts with unc-98.

The protein resides in the cytoplasm. Myosins are actin-based motor molecules with ATPase activity. Unconventional myosins serve in intracellular movements. Their highly divergent tails are presumed to bind to membranous compartments, which would be moved relative to actin filaments. This Caenorhabditis elegans protein is Unconventional myosin heavy chain 6.